A 382-amino-acid chain; its full sequence is uncharacterized protein (382 aa).

The next 12 membrane-spanning stretches (helical) occupy residues 8-28, 45-65, 75-95, 102-122, 131-151, 157-177, 204-224, 231-251, 270-290, 291-311, 325-345, and 349-369; these read VMLL…LNTL, MVSS…GYLI, YLAS…VGFW, FIAG…LMCS, LLAA…LLVS, LLHV…PLLF, LGVN…GLMP, GMAN…GILG, VQVF…AMAP, ALFI…AWAC, ALLL…AMLM, and SDNL…LMLL.

This sequence belongs to the major facilitator superfamily. YcaD (TC 2.A.1.26) family.

It is found in the cell inner membrane. This is an uncharacterized protein from Salmonella dublin (strain CT_02021853).